Reading from the N-terminus, the 358-residue chain is Bis(monoacylglycero)phosphate synthase CLN5 (358 aa).

Topologically, residues 1–23 (MAQEVDTAQGAEMRRGAGAARGR) are cytoplasmic. The helical; Signal-anchor for type II membrane protein transmembrane segment at 24–40 (ASWCWALALLWLAVVPG) threads the bilayer. Residues 41–358 (WSRVSGIPSR…PIRNKTLSGL (318 aa)) are Lumenal-facing. Intrachain disulfides connect Cys-70-Cys-159 and Cys-77-Cys-165. The Proton acceptor role is filled by His-117. N-linked (GlcNAc...) asparagine glycans are attached at residues Asn-130, Asn-143, Asn-178, and Asn-203. Residue Cys-231 is the Nucleophile; Acyl-thioester intermediate of the active site. N-linked (GlcNAc...) asparagine glycans are attached at residues Asn-255, Asn-271, and Asn-281. Residues 304–343 (FLLSLLQIFDAVIVHKQFYLFYNFEYWFLPMKFPFIKITY) are membrane-anchoring. An N-linked (GlcNAc...) asparagine glycan is attached at Asn-352.

It belongs to the CLN5 family. In terms of assembly, multimer. Interacts with SORT1, RAB5A and RAB7A. Interacts with PPT1, TPP1, CLN3, CLN6, CLN8, ATP5F1A and ATP5F1B. In terms of processing, N-glycosylated with both high mannose and complex type sugars. Glycosylation is important for proper folding and trafficking to the lysosomes. Post-translationally, the type II membrane signal anchor is proteolytically cleaved to produce a mature form that is transported to the lysosomes (Bis(monoacylglycero)phosphate synthase CLN5, secreted form). Can undergo proteolytic cleavage at the C-terminus, probably by a cysteine protease and may involve the removal of approximately 10-15 residues from the C-terminal end. In terms of tissue distribution, ubiquitous.

The protein localises to the lysosome. The protein resides in the membrane. It carries out the reaction S-hexadecanoyl-L-cysteinyl-[protein] + H2O = L-cysteinyl-[protein] + hexadecanoate + H(+). The catalysed reaction is 2 1-acyl-sn-glycero-3-phospho-(1'-sn-glycerol) = 1-acyl-sn-glycero-3-phospho-(3'-acyl-sn-1'-glycerol) + sn-glycero-3-phospho-(1'-sn-glycerol). The enzyme catalyses 2 1-(9Z-octadecenoyl)-sn-glycero-3-phospho-(1'-sn-glycerol) = 1-(9Z-octadecenoyl)-sn-glycero-3-phospho-(3'-(9Z-octadecenoyl)-1'-sn-glycerol) + sn-glycero-3-phospho-(1'-sn-glycerol). It catalyses the reaction 2 1-octadecanoyl-sn-glycero-3-phospho-(1'-sn-glycerol) = 1-octadecanoyl-sn-glycero-3-phospho-(3'-octadecanoyl-1'-sn-glycerol) + sn-glycero-3-phospho-(1'-sn-glycerol). It carries out the reaction 2 1-hexadecanoyl-sn-glycero-3-phospho-(1'-sn-glycerol) = 1-hexadecanoyl-sn-glycero-3-phospho-(3'-hexadecanoyl-1'-sn-glycerol) + sn-glycero-3-phospho-(1'-sn-glycerol). The catalysed reaction is 2 1-tetradecanoyl-sn-glycero-3-phospho-(1'-sn-glycerol) = 1-tetradecanoyl-sn-glycero-3-phospho-(3'-tetradecanoyl-1'-sn-glycerol) + sn-glycero-3-phospho-(1'-sn-glycerol). Its activity is regulated as follows. Anionic phospholipids activate bis(monoacylglycero)phosphate (BMP) synthase activity. Amiodarone, a cationic amphiphilic drug inhibits BMP synthase activity towards liposomal lysophosphatidylglycerol. Palmostatin B inhibits palmitoyl protein thioesterase activity. Its function is as follows. Catalyzes the synthesis of bis(monoacylglycero)phosphate (BMP) via transacylation of 2 molecules of lysophosphatidylglycerol (LPG). BMP also known as lysobisphosphatidic acid plays a key role in the formation of intraluminal vesicles and in maintaining intracellular cholesterol homeostasis. Can use only LPG as the exclusive lysophospholipid acyl donor for base exchange and displays BMP synthase activity towards various LPGs (LPG 14:0, LPG 16:0, LPG 18:0, LPG 18:1) with a higher preference for longer chain lengths. Plays a role in influencing the retrograde trafficking of lysosomal sorting receptors SORT1 and IGF2R from the endosomes to the trans-Golgi network by controlling the recruitment of retromer complex to the endosomal membrane. Regulates the localization and activation of RAB7A which is required to recruit the retromer complex to the endosomal membrane. Exhibits palmitoyl protein thioesterase (S-depalmitoylation) activity in vitro and most likely plays a role in protein S-depalmitoylation. In Homo sapiens (Human), this protein is Bis(monoacylglycero)phosphate synthase CLN5 (CLN5).